Consider the following 172-residue polypeptide: Large ribosomal subunit protein bL17 (172 aa).

A disordered region spans residues 123–172 (ATGSKRAQTEEAASQEPAAEAGKQPAEGATSVQTAEAADASQAEGEAEEK). The segment covering 132–143 (EEAASQEPAAEA) has biased composition (low complexity).

The protein belongs to the bacterial ribosomal protein bL17 family. Part of the 50S ribosomal subunit. Contacts protein L32.

This Thermobifida fusca (strain YX) protein is Large ribosomal subunit protein bL17.